A 104-amino-acid polypeptide reads, in one-letter code: Large ribosomal subunit protein bL21 (104 aa).

Belongs to the bacterial ribosomal protein bL21 family. In terms of assembly, part of the 50S ribosomal subunit. Contacts protein L20.

Its function is as follows. This protein binds to 23S rRNA in the presence of protein L20. The polypeptide is Large ribosomal subunit protein bL21 (Kosmotoga olearia (strain ATCC BAA-1733 / DSM 21960 / TBF 19.5.1)).